A 352-amino-acid chain; its full sequence is Thrombopoietin (352 aa).

The signal sequence occupies residues 1–23 (MELTELLLVVMLLLTARLDPCLP). Cystine bridges form between Cys-28–Cys-172 and Cys-50–Cys-106. N-linked (GlcNAc...) asparagine glycans are attached at residues Asn-185, Asn-197, Asn-206, Asn-234, and Asn-255. Over residues 233 to 245 (LNQTSRSLNQTPG) the composition is skewed to polar residues. 2 disordered regions span residues 233-259 (LNQT…GTHG) and 292-352 (YSPS…SQEE). The segment covering 311 to 327 (PTSPTPQNPLQPPPPDP) has biased composition (pro residues). Residues Asn-332 and Asn-347 are each glycosylated (N-linked (GlcNAc...) asparagine).

It belongs to the EPO/TPO family.

Its subcellular location is the secreted. Functionally, lineage-specific cytokine affecting the proliferation and maturation of megakaryocytes from their committed progenitor cells. It acts at a late stage of megakaryocyte development. It may be the major physiological regulator of circulating platelets. This Canis lupus familiaris (Dog) protein is Thrombopoietin (THPO).